Reading from the N-terminus, the 182-residue chain is Oligoribonuclease (182 aa).

The 164-residue stretch at 8 to 171 (LIWIDLEMTG…DDIRESIKEL (164 aa)) folds into the Exonuclease domain. The active site involves Y129.

It belongs to the oligoribonuclease family.

The protein localises to the cytoplasm. Its function is as follows. 3'-to-5' exoribonuclease specific for small oligoribonucleotides. The chain is Oligoribonuclease from Actinobacillus succinogenes (strain ATCC 55618 / DSM 22257 / CCUG 43843 / 130Z).